A 65-amino-acid polypeptide reads, in one-letter code: Alpha-toxin Lqq4 (65 aa).

Residues 3 to 65 (RDAYIADDKN…VPIRIPGKCR (63 aa)) enclose the LCN-type CS-alpha/beta domain. Residues 9–13 (DDKNC) are specificity module, loop 1. Cystine bridges form between C13–C64, C17–C37, C23–C47, and C27–C49. Specificity module, loop stretches follow at residues 40-44 (LGKYG) and 57-65 (PIRIPGKCR). R65 bears the Arginine amide mark.

This sequence belongs to the long (4 C-C) scorpion toxin superfamily. Sodium channel inhibitor family. Alpha subfamily. Post-translationally, the recombinant toxin which is used for activity tests is not amidated. However, C-terminal amidation does not appear to play an important role in activity, since the non-amidated recombinant toxin and the native toxin (which is amidated) show similar activities on all sodium channels tested. In terms of tissue distribution, expressed by the venom gland.

The protein localises to the secreted. Alpha toxins bind voltage-independently at site-3 of sodium channels (Nav) and inhibit the inactivation of the activated channels, thereby blocking neuronal transmission. Both native and recombinant (non-amidated) toxins inhibit inactivation of Nav1.2/SCN2A (EC(50)=31.2-36.6 nM), Nav1.6/SCN8A (EC(50)=6.9-8.9 nM), and Nav1.7/SCN9A (EC(50)=182.0-260.1 nM). This chain is Alpha-toxin Lqq4, found in Leiurus quinquestriatus quinquestriatus (Egyptian scorpion).